Here is a 541-residue protein sequence, read N- to C-terminus: AT-rich interactive domain-containing protein 3A (541 aa).

Residues 17–172 are disordered; that stretch reads RLQQELEARQ…KHPNPQAFPT (156 aa). Over residues 55 to 73 the composition is skewed to low complexity; it reads LKIQRAQAAALAAMRAAAA. Over residues 84-102 the composition is skewed to acidic residues; the sequence is SDEEEEDGESMASDEEDEK. The segment covering 103–112 has biased composition (basic and acidic residues); that stretch reads ERDGESERYP. Residues 115 to 144 show a composition bias toward acidic residues; sequence GSEEEDLKGKWDEDDFEDEGEEDDYEDMEE. The region spanning 212-304 is the ARID domain; sequence DPKRKEFLDD…YLYPYECEKR (93 aa). Residues 407-501 form the REKLES domain; that stretch reads AALEQLREKL…GVLFAQPPTS (95 aa). Positions 408 to 450 are important for nuclear localization; that stretch reads ALEQLREKLESGEPPEKKMALGTEEQQRLQRAIQHNLLAMTAQ. Residues 452–473 form a homodimerization region; it reads PMNIRINSQAEGRQDSAVNLTT. An important for cytoplasmic localization region spans residues 497–504; it reads QPPTSASG. The tract at residues 499-541 is disordered; sequence PTSASGTSKGSSNRTGSIGGGSSTSQAAPPPAPSAPTSNNPSP.

In terms of assembly, homodimer.

It is found in the nucleus. The protein resides in the cytoplasm. Functionally, transcription factor required for smad1 and smad2-mediated responses to TGFbeta during mesoderm induction. This is AT-rich interactive domain-containing protein 3A (arid3a) from Xenopus tropicalis (Western clawed frog).